A 571-amino-acid polypeptide reads, in one-letter code: PHD and RING finger domain-containing protein C126.07c (571 aa).

Residues 18-79 (CIICLSNLPN…RVANTCPLCR (62 aa)) form an RING-type 1; atypical zinc finger. The PHD-type zinc-finger motif lies at 122–170 (TCRCVICGRSDHAEVLLLCDGCDDAYHTYCLNMDAVPIEEFYCPNCVLL). The segment at 125 to 168 (CVICGRSDHAEVLLLCDGCDDAYHTYCLNMDAVPIEEFYCPNCV) adopts an RING-type 2; degenerate zinc-finger fold. Residues 305-324 (ATEATISNPRPSSGRFQQTP) show a composition bias toward polar residues. The segment at 305-377 (ATEATISNPR…VLGNNSSSKS (73 aa)) is disordered. Residues 346–356 (RRQKRPTRRHI) show a composition bias toward basic residues. Polar residues predominate over residues 359 to 377 (SNKSSGSSTVLGNNSSSKS).

Its subcellular location is the cytoplasm. The protein localises to the nucleus. The polypeptide is PHD and RING finger domain-containing protein C126.07c (Schizosaccharomyces pombe (strain 972 / ATCC 24843) (Fission yeast)).